The sequence spans 240 residues: Eukaryotic translation initiation factor 3 subunit K (240 aa).

The region spanning Tyr-41–Lys-221 is the PCI domain.

The protein belongs to the eIF-3 subunit K family. Component of the eukaryotic translation initiation factor 3 (eIF-3) complex.

The protein resides in the cytoplasm. In terms of biological role, component of the eukaryotic translation initiation factor 3 (eIF-3) complex, which is involved in protein synthesis of a specialized repertoire of mRNAs and, together with other initiation factors, stimulates binding of mRNA and methionyl-tRNAi to the 40S ribosome. The eIF-3 complex specifically targets and initiates translation of a subset of mRNAs involved in cell proliferation. This chain is Eukaryotic translation initiation factor 3 subunit K, found in Caenorhabditis elegans.